Reading from the N-terminus, the 314-residue chain is Formate-nitrite transporter (314 aa).

The Cytoplasmic portion of the chain corresponds to 1–47; that stretch reads MSKGKSKYVIDPISVKTACTSEESYIRCVEYGKGKAHYPNLSLLAKA. Residues 48-68 traverse the membrane as a helical segment; the sequence is ILAGVFVGVCAHASGIAGGHF. Over 69 to 78 the chain is Extracellular; it reads YYHKLREYVG. A helical transmembrane segment spans residues 79 to 99; that stretch reads ISMSAFVYGFTFPIAFLCIIA. The Cytoplasmic portion of the chain corresponds to 100–128; the sequence is TGSDLFTGNTLAVTTALLQRKVSLLQYLR. Residues 129 to 149 form a helical membrane-spanning segment; sequence VMSISLFGNYLGAVSFAFFVS. Residues 150 to 185 are Extracellular-facing; it reads HLSGAYEKHTDVTKNHIFQFLNDIAEKKISHTFIQC. The chain crosses the membrane as a helical span at residues 186–206; that stretch reads ICLAIGCNIFVCLAVYFVLTI. Topologically, residues 207-211 are cytoplasmic; it reads KDGSG. Residues 212 to 232 traverse the membrane as a helical segment; that stretch reads MVFSVFFAVYAFAIAGYEHII. Topologically, residues 233 to 257 are extracellular; the sequence is ANMYTLNLALMVEAKVTWSKVYFHN. The helical transmembrane segment at 258-278 threads the bilayer; that stretch reads LLPTLIGNYIAGALVLACPLF. Residues 279–314 are Cytoplasmic-facing; sequence YIYRNSYRDYERTRGDGSNCGLRSLSIEMQNGSNGN.

This sequence belongs to the FNT transporter (TC 1.A.16) family. Homopentamer.

The protein localises to the cell membrane. Its subcellular location is the vacuole membrane. It catalyses the reaction (S)-lactate(in) + H(+)(in) = (S)-lactate(out) + H(+)(out). The catalysed reaction is formate(in) + H(+)(in) = formate(out) + H(+)(out). The enzyme catalyses pyruvate(out) + H(+)(out) = pyruvate(in) + H(+)(in). It carries out the reaction acetate(out) + H(+)(out) = acetate(in) + H(+)(in). Inhibited by the Malaria Box compound MMV007839 and its derivatives BH296 and BH267.meta. Functionally, monocarboxylate-proton symporter that mediates the efflux of the waste product lactate in the intraerythrocytic parasites; active in acidic-to-neutral pH range. Transports L-lactate. This chain is Formate-nitrite transporter, found in Plasmodium knowlesi (strain H).